The sequence spans 545 residues: Glucose-6-phosphate isomerase (545 aa).

Glu-343 acts as the Proton donor in catalysis. Residues His-374 and Lys-513 contribute to the active site.

This sequence belongs to the GPI family.

It localises to the cytoplasm. The enzyme catalyses alpha-D-glucose 6-phosphate = beta-D-fructose 6-phosphate. Its pathway is carbohydrate biosynthesis; gluconeogenesis. The protein operates within carbohydrate degradation; glycolysis; D-glyceraldehyde 3-phosphate and glycerone phosphate from D-glucose: step 2/4. Functionally, catalyzes the reversible isomerization of glucose-6-phosphate to fructose-6-phosphate. This chain is Glucose-6-phosphate isomerase, found in Methylibium petroleiphilum (strain ATCC BAA-1232 / LMG 22953 / PM1).